Consider the following 393-residue polypeptide: NAD(P)H-quinone oxidoreductase subunit H, chloroplastic (393 aa).

This sequence belongs to the complex I 49 kDa subunit family. In terms of assembly, NDH is composed of at least 16 different subunits, 5 of which are encoded in the nucleus.

Its subcellular location is the plastid. It is found in the chloroplast thylakoid membrane. It carries out the reaction a plastoquinone + NADH + (n+1) H(+)(in) = a plastoquinol + NAD(+) + n H(+)(out). The enzyme catalyses a plastoquinone + NADPH + (n+1) H(+)(in) = a plastoquinol + NADP(+) + n H(+)(out). Functionally, NDH shuttles electrons from NAD(P)H:plastoquinone, via FMN and iron-sulfur (Fe-S) centers, to quinones in the photosynthetic chain and possibly in a chloroplast respiratory chain. The immediate electron acceptor for the enzyme in this species is believed to be plastoquinone. Couples the redox reaction to proton translocation, and thus conserves the redox energy in a proton gradient. The sequence is that of NAD(P)H-quinone oxidoreductase subunit H, chloroplastic from Panax ginseng (Korean ginseng).